The following is a 206-amino-acid chain: Large ribosomal subunit protein uL4 (206 aa).

The segment at 47–76 (GTQSAKTRAEVSGGGIKPWRQKGTGRARQG) is disordered.

Belongs to the universal ribosomal protein uL4 family. Part of the 50S ribosomal subunit.

In terms of biological role, one of the primary rRNA binding proteins, this protein initially binds near the 5'-end of the 23S rRNA. It is important during the early stages of 50S assembly. It makes multiple contacts with different domains of the 23S rRNA in the assembled 50S subunit and ribosome. Functionally, forms part of the polypeptide exit tunnel. The sequence is that of Large ribosomal subunit protein uL4 from Clostridium botulinum (strain Okra / Type B1).